The chain runs to 166 residues: MASPDVEYRCFVGGLAWATDDRALETAFSQYGEVLDSKIINDRETGRSRGFGFVTFKDEKSMKDAIEGMNGQDLDGRSITVNEAQSRGSGGGGGGRGGGGGYRSGGGGGYGGGGGGYGGGGREGGYSGGGGGYSSRGGGGGGYGGGGRRDGGEGGGYGGSGGGGGW.

In terms of domain architecture, RRM spans 8-86 (YRCFVGGLAW…RSITVNEAQS (79 aa)). The tract at residues 68–166 (GMNGQDLDGR…YGGSGGGGGW (99 aa)) is disordered. 2 stretches are compositionally biased toward gly residues: residues 88 to 146 (GSGG…YGGG) and 153 to 166 (EGGGYGGSGGGGGW).

In terms of tissue distribution, predominantly expressed in meristematic and growing tissue.

The protein resides in the nucleus. In terms of biological role, may play a general role in circadian phenomena associated with meristematic tissue. This is Glycine-rich RNA-binding protein GRP1A from Sinapis alba (White mustard).